Here is a 225-residue protein sequence, read N- to C-terminus: Imidazole glycerol phosphate synthase subunit HisH (225 aa).

The Glutamine amidotransferase type-1 domain maps to 5-220 (KNVIVDTGCA…LELDSTELNQ (216 aa)). C80 functions as the Nucleophile in the catalytic mechanism. Catalysis depends on residues H195 and E197.

Heterodimer of HisH and HisF.

It localises to the cytoplasm. It carries out the reaction 5-[(5-phospho-1-deoxy-D-ribulos-1-ylimino)methylamino]-1-(5-phospho-beta-D-ribosyl)imidazole-4-carboxamide + L-glutamine = D-erythro-1-(imidazol-4-yl)glycerol 3-phosphate + 5-amino-1-(5-phospho-beta-D-ribosyl)imidazole-4-carboxamide + L-glutamate + H(+). The enzyme catalyses L-glutamine + H2O = L-glutamate + NH4(+). It participates in amino-acid biosynthesis; L-histidine biosynthesis; L-histidine from 5-phospho-alpha-D-ribose 1-diphosphate: step 5/9. Functionally, IGPS catalyzes the conversion of PRFAR and glutamine to IGP, AICAR and glutamate. The HisH subunit catalyzes the hydrolysis of glutamine to glutamate and ammonia as part of the synthesis of IGP and AICAR. The resulting ammonia molecule is channeled to the active site of HisF. In Colwellia psychrerythraea (strain 34H / ATCC BAA-681) (Vibrio psychroerythus), this protein is Imidazole glycerol phosphate synthase subunit HisH.